A 570-amino-acid polypeptide reads, in one-letter code: Urease subunit alpha (570 aa).

The Urease domain occupies 133 to 570 (GGIDNHIHYI…LPLAQLYNLF (438 aa)). Residues histidine 138, histidine 140, and lysine 221 each contribute to the Ni(2+) site. Residue lysine 221 is modified to N6-carboxylysine. Histidine 223 provides a ligand contact to substrate. 2 residues coordinate Ni(2+): histidine 250 and histidine 276. Histidine 324 functions as the Proton donor in the catalytic mechanism. Aspartate 364 serves as a coordination point for Ni(2+).

The protein belongs to the metallo-dependent hydrolases superfamily. Urease alpha subunit family. In terms of assembly, heterotrimer of UreA (gamma), UreB (beta) and UreC (alpha) subunits. Three heterotrimers associate to form the active enzyme. The cofactor is Ni cation. Post-translationally, carboxylation allows a single lysine to coordinate two nickel ions.

It is found in the cytoplasm. The enzyme catalyses urea + 2 H2O + H(+) = hydrogencarbonate + 2 NH4(+). Its pathway is nitrogen metabolism; urea degradation; CO(2) and NH(3) from urea (urease route): step 1/1. In Cytophaga hutchinsonii (strain ATCC 33406 / DSM 1761 / CIP 103989 / NBRC 15051 / NCIMB 9469 / D465), this protein is Urease subunit alpha.